Consider the following 386-residue polypeptide: Alanine racemase (386 aa).

Lys-38 acts as the Proton acceptor; specific for D-alanine in catalysis. An N6-(pyridoxal phosphate)lysine modification is found at Lys-38. Arg-136 is a binding site for substrate. Catalysis depends on Tyr-267, which acts as the Proton acceptor; specific for L-alanine. Residue Met-315 participates in substrate binding.

This sequence belongs to the alanine racemase family. The cofactor is pyridoxal 5'-phosphate.

It carries out the reaction L-alanine = D-alanine. Its pathway is amino-acid biosynthesis; D-alanine biosynthesis; D-alanine from L-alanine: step 1/1. Functionally, catalyzes the interconversion of L-alanine and D-alanine. May also act on other amino acids. The sequence is that of Alanine racemase (alr) from Clostridium perfringens (strain ATCC 13124 / DSM 756 / JCM 1290 / NCIMB 6125 / NCTC 8237 / Type A).